Reading from the N-terminus, the 251-residue chain is Ubiquinone/menaquinone biosynthesis C-methyltransferase UbiE (251 aa).

S-adenosyl-L-methionine is bound by residues Thr74, Asp95, 123 to 124, and Ser140; that span reads NA.

The protein belongs to the class I-like SAM-binding methyltransferase superfamily. MenG/UbiE family.

It catalyses the reaction a 2-demethylmenaquinol + S-adenosyl-L-methionine = a menaquinol + S-adenosyl-L-homocysteine + H(+). The catalysed reaction is a 2-methoxy-6-(all-trans-polyprenyl)benzene-1,4-diol + S-adenosyl-L-methionine = a 5-methoxy-2-methyl-3-(all-trans-polyprenyl)benzene-1,4-diol + S-adenosyl-L-homocysteine + H(+). Its pathway is quinol/quinone metabolism; menaquinone biosynthesis; menaquinol from 1,4-dihydroxy-2-naphthoate: step 2/2. The protein operates within cofactor biosynthesis; ubiquinone biosynthesis. Functionally, methyltransferase required for the conversion of demethylmenaquinol (DMKH2) to menaquinol (MKH2) and the conversion of 2-polyprenyl-6-methoxy-1,4-benzoquinol (DDMQH2) to 2-polyprenyl-3-methyl-6-methoxy-1,4-benzoquinol (DMQH2). The chain is Ubiquinone/menaquinone biosynthesis C-methyltransferase UbiE from Klebsiella pneumoniae (strain 342).